The sequence spans 108 residues: FK506-binding protein 1 (108 aa).

A PPIase FKBP-type domain is found at G20–N108.

This sequence belongs to the FKBP-type PPIase family. FKBP1 subfamily.

Its subcellular location is the cytoplasm. The catalysed reaction is [protein]-peptidylproline (omega=180) = [protein]-peptidylproline (omega=0). With respect to regulation, inhibited by both FK506 and rapamycin. Functionally, PPIases accelerate the folding of proteins. It catalyzes the cis-trans isomerization of proline imidic peptide bonds in oligopeptides. The protein is FK506-binding protein 1 (FPR1) of Yarrowia lipolytica (strain CLIB 122 / E 150) (Yeast).